Consider the following 286-residue polypeptide: Acetylglutamate kinase (286 aa).

Residues 69-70, R91, and N185 each bind substrate; that span reads GG.

The protein belongs to the acetylglutamate kinase family. ArgB subfamily.

Its subcellular location is the cytoplasm. The catalysed reaction is N-acetyl-L-glutamate + ATP = N-acetyl-L-glutamyl 5-phosphate + ADP. It participates in amino-acid biosynthesis; L-arginine biosynthesis; N(2)-acetyl-L-ornithine from L-glutamate: step 2/4. Functionally, catalyzes the ATP-dependent phosphorylation of N-acetyl-L-glutamate. This chain is Acetylglutamate kinase, found in Chlorobium chlorochromatii (strain CaD3).